A 742-amino-acid chain; its full sequence is NAD(P)H-quinone oxidoreductase subunit 5, chloroplastic (742 aa).

Transmembrane regions (helical) follow at residues 9-29 (WIIP…LLLF), 40-60 (WSFQ…NLSI), 89-109 (IDPL…MVLI), 125-145 (FAYM…SNLI), 147-167 (IYIF…FWFT), 185-205 (GDFG…SFEF), 219-239 (NEVN…GAIA), 258-278 (TPIS…FLVA), 283-303 (LFIV…ITVF), 327-347 (LGYM…FHLI), 354-374 (ALLF…VGYC), 396-416 (NSFL…CFWS), 425-445 (WLYS…TAFY), 550-570 (LFPI…GIPF), 606-626 (FFSV…YKPV), and 722-742 (YLFF…FFNV).

Belongs to the complex I subunit 5 family. As to quaternary structure, NDH is composed of at least 16 different subunits, 5 of which are encoded in the nucleus.

Its subcellular location is the plastid. The protein localises to the chloroplast thylakoid membrane. The catalysed reaction is a plastoquinone + NADH + (n+1) H(+)(in) = a plastoquinol + NAD(+) + n H(+)(out). The enzyme catalyses a plastoquinone + NADPH + (n+1) H(+)(in) = a plastoquinol + NADP(+) + n H(+)(out). Functionally, NDH shuttles electrons from NAD(P)H:plastoquinone, via FMN and iron-sulfur (Fe-S) centers, to quinones in the photosynthetic chain and possibly in a chloroplast respiratory chain. The immediate electron acceptor for the enzyme in this species is believed to be plastoquinone. Couples the redox reaction to proton translocation, and thus conserves the redox energy in a proton gradient. The protein is NAD(P)H-quinone oxidoreductase subunit 5, chloroplastic (ndhF) of Lactuca sativa (Garden lettuce).